The sequence spans 323 residues: o-succinylbenzoate synthase (323 aa).

Lys134 acts as the Proton donor in catalysis. Mg(2+) is bound by residues Asp162, Glu191, and Asp214. Residue Lys236 is the Proton acceptor of the active site.

Belongs to the mandelate racemase/muconate lactonizing enzyme family. MenC type 1 subfamily. The cofactor is a divalent metal cation.

The enzyme catalyses (1R,6R)-6-hydroxy-2-succinyl-cyclohexa-2,4-diene-1-carboxylate = 2-succinylbenzoate + H2O. It participates in quinol/quinone metabolism; 1,4-dihydroxy-2-naphthoate biosynthesis; 1,4-dihydroxy-2-naphthoate from chorismate: step 4/7. Its pathway is quinol/quinone metabolism; menaquinone biosynthesis. In terms of biological role, converts 2-succinyl-6-hydroxy-2,4-cyclohexadiene-1-carboxylate (SHCHC) to 2-succinylbenzoate (OSB). In Yersinia pestis bv. Antiqua (strain Antiqua), this protein is o-succinylbenzoate synthase.